Consider the following 309-residue polypeptide: Methionyl-tRNA formyltransferase (309 aa).

Residue 109–112 (SLLP) coordinates (6S)-5,6,7,8-tetrahydrofolate.

The protein belongs to the Fmt family.

The catalysed reaction is L-methionyl-tRNA(fMet) + (6R)-10-formyltetrahydrofolate = N-formyl-L-methionyl-tRNA(fMet) + (6S)-5,6,7,8-tetrahydrofolate + H(+). Attaches a formyl group to the free amino group of methionyl-tRNA(fMet). The formyl group appears to play a dual role in the initiator identity of N-formylmethionyl-tRNA by promoting its recognition by IF2 and preventing the misappropriation of this tRNA by the elongation apparatus. The chain is Methionyl-tRNA formyltransferase from Thiobacillus denitrificans (strain ATCC 25259 / T1).